The chain runs to 353 residues: Abasic site processing protein HMCES (353 aa).

The Nucleophile role is filled by Cys-2. Position 2 is a thiazolidine linkage to a ring-opened DNA abasic site (Cys-2). Glu-127 is a catalytic residue. Residues Lys-148 and Lys-151 each participate in a glycyl lysine isopeptide (Lys-Gly) (interchain with G-Cter in SUMO2) cross-link. Ser-160 carries the phosphoserine modification. Glycyl lysine isopeptide (Lys-Gly) (interchain with G-Cter in SUMO2) cross-links involve residues Lys-274 and Lys-275. Positions 292-353 (TKSPKKEVPD…DEPMAKKPNS (62 aa)) are disordered. A Phosphoserine modification is found at Ser-294. Residues 295–307 (PKKEVPDSPKKDA) are compositionally biased toward basic and acidic residues. A Glycyl lysine isopeptide (Lys-Gly) (interchain with G-Cter in SUMO2) cross-link involves residue Lys-305. A Phosphoserine modification is found at Ser-321. The PIP-box motif lies at 332–338 (SFLDRWL). A compositionally biased stretch (basic and acidic residues) spans 336–353 (RWLKQEKEDEPMAKKPNS). Glycyl lysine isopeptide (Lys-Gly) (interchain with G-Cter in SUMO2) cross-links involve residues Lys-339 and Lys-342.

This sequence belongs to the SOS response-associated peptidase family. As to quaternary structure, interacts (via PIP-box motif) with PCNA. As to expression, expressed in embryonic stem cells.

Its subcellular location is the chromosome. With respect to regulation, formation and reversal of DNA-protein cross-link depends on DNA context. Catalyzes formation of the thiazolidine linkage in presence of abasic sites in single-stranded DNA. Mediates the reversal of the thiazolidine cross-link in presence of double stranded DNA. Sensor of abasic sites in single-stranded DNA (ssDNA) required to preserve genome integrity by promoting error-free repair of abasic sites. Acts as an enzyme that recognizes and binds abasic sites in ssDNA at replication forks and chemically modifies the lesion by forming a covalent cross-link with DNA: forms a stable thiazolidine linkage between a ring-opened abasic site and the alpha-amino and sulfhydryl substituents of its N-terminal catalytic cysteine residue. Promotes error-free repair by protecting abasic sites from translesion synthesis (TLS) polymerases and endonucleases that are error-prone and would generate mutations and double-strand breaks. The HMCES DNA-protein cross-link is then either reversed or degraded. HMCES is able to catalyze the reversal of its thiazolidine cross-link and cycle between a cross-link and a non-cross-linked state depending on DNA context: mediates self-reversal of the thiazolidine cross-link in double stranded DNA, allowing APEX1 to initiate downstream repair of abasic sites. The HMCES DNA-protein cross-link can also be degraded by the SPRTN metalloprotease following unfolding by the BRIP1/FANCJ helicase. Has preference for ssDNA, but can also accommodate double-stranded DNA with 3' or 5' overhang (dsDNA), and dsDNA-ssDNA 3' junction. Plays a protective role during somatic hypermutation of immunoglobulin genes in B-cells: acts via its ability to form covalent cross-links with abasic sites, thereby limiting the accumulation of deletions in somatic hypermutation target regions. Also involved in class switch recombination (CSR) in B-cells independently of the formation of a DNA-protein cross-link: acts by binding and protecting ssDNA overhangs to promote DNA double-strand break repair through the microhomology-mediated alternative-end-joining (Alt-EJ) pathway. Acts as a protease: mediates autocatalytic processing of its N-terminal methionine in order to expose the catalytic cysteine. In Mus musculus (Mouse), this protein is Abasic site processing protein HMCES.